Here is a 202-residue protein sequence, read N- to C-terminus: LexA repressor (202 aa).

A DNA-binding region (H-T-H motif) is located at residues 28–48 (RAEIASRLGFRSPNAAEEHLK). Active-site for autocatalytic cleavage activity residues include serine 119 and lysine 156.

It belongs to the peptidase S24 family. In terms of assembly, homodimer.

The enzyme catalyses Hydrolysis of Ala-|-Gly bond in repressor LexA.. Functionally, represses a number of genes involved in the response to DNA damage (SOS response), including recA and lexA. Binds to the 16 bp palindromic sequence 5'-CTGTATATATATACAG-3'. In the presence of single-stranded DNA, RecA interacts with LexA causing an autocatalytic cleavage which disrupts the DNA-binding part of LexA, leading to derepression of the SOS regulon and eventually DNA repair. The chain is LexA repressor from Sodalis glossinidius (strain morsitans).